Consider the following 243-residue polypeptide: MNWSDDGIVLGGRRFGEGGLILDVLTREKGRRSGLVYGGASRRKRAQFEAGNTIALSWTGRLDDQLGRFDVAEARKDRASRLLDDPAALAALSAITSLLRGGLNEGDAAGSSLYEATTLLLDQLTEPNVWPALYVRWELGLLSALGFGLDLDECAVSGANDGLTHVSPRTGRAVRGSEAEPYVDRLFALPSFLIDPRADVLPGDIAAGLRLTGYFIEGRLFGSVHRGLPPERERLLKRITPPA.

This sequence belongs to the RecO family.

Its function is as follows. Involved in DNA repair and RecF pathway recombination. This Hyphomonas neptunium (strain ATCC 15444) protein is DNA repair protein RecO.